The sequence spans 251 residues: tRNA1(Val) (adenine(37)-N6)-methyltransferase (251 aa).

Belongs to the methyltransferase superfamily. tRNA (adenine-N(6)-)-methyltransferase family.

Its subcellular location is the cytoplasm. The catalysed reaction is adenosine(37) in tRNA1(Val) + S-adenosyl-L-methionine = N(6)-methyladenosine(37) in tRNA1(Val) + S-adenosyl-L-homocysteine + H(+). In terms of biological role, specifically methylates the adenine in position 37 of tRNA(1)(Val) (anticodon cmo5UAC). The protein is tRNA1(Val) (adenine(37)-N6)-methyltransferase of Shewanella frigidimarina (strain NCIMB 400).